Consider the following 398-residue polypeptide: Arylacetamide deacetylase (398 aa).

The Cytoplasmic portion of the chain corresponds to 1–5; sequence MGKTI. Residues 6 to 26 form a helical; Signal-anchor for type II membrane protein membrane-spanning segment; it reads SLLISVVLVAYYLYIPLPDAI. At 27-398 the chain is on the lumenal side; the sequence is EEPWKVVWET…QYLSWLIKNL (372 aa). Positions 110 to 112 match the Involved in the stabilization of the negatively charged intermediate by the formation of the oxyanion hole motif; it reads HGG. Cysteine 115 and cysteine 339 are joined by a disulfide. Residue serine 188 is part of the active site. N-linked (GlcNAc...) asparagine glycosylation is present at asparagine 281. Residues aspartate 342 and histidine 372 contribute to the active site.

This sequence belongs to the 'GDXG' lipolytic enzyme family. N-glycosylated. In terms of tissue distribution, highest levels in liver with lower levels in jejunum and kidney.

It localises to the endoplasmic reticulum membrane. The protein resides in the microsome membrane. The enzyme catalyses a triacylglycerol + H2O = a diacylglycerol + a fatty acid + H(+). Its function is as follows. Displays cellular triglyceride lipase activity in liver, increases the levels of intracellular fatty acids derived from the hydrolysis of newly formed triglyceride stores and plays a role in very low-density lipoprotein assembly. Displays serine esterase activity in liver. Deacetylates a variety of arylacetamide substrates, including xenobiotic compounds and procarcinogens, converting them to the primary arylamide compounds and increasing their toxicity. This Mus musculus (Mouse) protein is Arylacetamide deacetylase (Aadac).